Consider the following 132-residue polypeptide: Ribonuclease VapC15 (132 aa).

In terms of domain architecture, PINc spans 1–121 (MIVDTSVWIA…HRDRDYEAIR (121 aa)). Aspartate 96 provides a ligand contact to Mg(2+). Mn(2+) contacts are provided by aspartate 96, aspartate 114, and aspartate 116.

The protein belongs to the PINc/VapC protein family. As to quaternary structure, crystallizes as a VapB15-VapC15(2) heterotrimer and as a VapB15(2)-VapC15(2) heterotetramer; each toxin pair forms a homodimer which creates a channel in which the antitoxin binds. It depends on Mg(2+) as a cofactor. Mn(2+) serves as cofactor.

Its activity is regulated as follows. RNase activity inhibited by EDTA. Its function is as follows. Toxic component of a type II toxin-antitoxin (TA) system. Degrades total E.coli RNA, which is partially inhibited by cognate antitoxin VapB15. Upon expression in M.smegmatis inhibits colony formation, which is neutralized by coexpression with VapB15. The protein is Ribonuclease VapC15 of Mycobacterium tuberculosis (strain ATCC 25618 / H37Rv).